Reading from the N-terminus, the 591-residue chain is V-type ATP synthase alpha chain (591 aa).

ATP is bound at residue 242-249; it reads GPFGAGKT.

Belongs to the ATPase alpha/beta chains family.

The enzyme catalyses ATP + H2O + 4 H(+)(in) = ADP + phosphate + 5 H(+)(out). Functionally, produces ATP from ADP in the presence of a proton gradient across the membrane. The V-type alpha chain is a catalytic subunit. In Chlamydia muridarum (strain MoPn / Nigg), this protein is V-type ATP synthase alpha chain (atpA).